The chain runs to 82 residues: MAKHYVYIVKCKDNSLYTGYTTNVEARIATHNAGKGAKYTKTRRPVVLVYQEMFSSKSEAMRREYEIKTFSRQQKLKMIEER.

A GIY-YIG domain is found at 2–77; that stretch reads AKHYVYIVKC…KTFSRQQKLK (76 aa).

It belongs to the UPF0213 family.

The protein is UPF0213 protein SH2523 of Staphylococcus haemolyticus (strain JCSC1435).